A 142-amino-acid chain; its full sequence is Coactosin-like protein (142 aa).

Ala2 is modified (N-acetylalanine). One can recognise an ADF-H domain in the interval 2-130 (ATKIDKEACR…EEDFIRSELK (129 aa)). The segment at 66–75 (TGDAMSKRSK) is flexible and important for F-actin binding. An N6-acetyllysine modification is found at Lys102. Ser141 carries the post-translational modification Phosphoserine.

It belongs to the actin-binding proteins ADF family. Coactosin subfamily. Interacts with 5-lipoxygenase (ALOX5/5LO) in a calcium-independent manner. Binds to F-actin with a stoichiometry of 1:2.

It is found in the cytoplasm. The protein localises to the cytoskeleton. Its subcellular location is the nucleus. Binds to F-actin in a calcium-independent manner. Has no direct effect on actin depolymerization. Acts as a chaperone for ALOX5 (5LO), influencing both its stability and activity in leukotrienes synthesis. The protein is Coactosin-like protein (Cotl1) of Mus musculus (Mouse).